Here is a 283-residue protein sequence, read N- to C-terminus: Probable endonuclease 4 (283 aa).

Positions 69, 113, 148, 182, 185, 217, 230, 232, and 262 each coordinate Zn(2+).

Belongs to the AP endonuclease 2 family. The cofactor is Zn(2+).

It carries out the reaction Endonucleolytic cleavage to 5'-phosphooligonucleotide end-products.. In terms of biological role, endonuclease IV plays a role in DNA repair. It cleaves phosphodiester bonds at apurinic or apyrimidinic (AP) sites, generating a 3'-hydroxyl group and a 5'-terminal sugar phosphate. This is Probable endonuclease 4 from Bifidobacterium longum (strain NCC 2705).